The following is a 452-amino-acid chain: uncharacterized protein (452 aa).

The next 14 helical transmembrane spans lie at 8-28, 39-59, 77-97, 100-122, 134-156, 161-183, 203-222, 226-243, 266-286, 302-322, 330-350, 359-379, 393-415, and 425-447; these read AVFLTAVASGTMLNPLNSSMI, FHLSFTTVSWLISSFYLASAV, FLFGLILVAVSAIGAPFAPTF, LLVMRLFQSVGSSAIYPSGVGLI, LAVLSIFASAMTALGPTAGGFLI, WPAIFIVNLPFIILSFLLGLYMF, LGIVLFAGGIIFLLSFLLSF, PHAVEGVLGLLLLCAFVW, AVYVQFILLNVFFYCLFFGLP, LFMLFMSGMSIVVSPLTGKWI, PIFAGALLMTAGAVLLTIFFI, LILSLLGIGYGLGNVALQAAM, GLFQTCRYLGSILSSVILGILFG, and MMGIIMIIAGGASLLMAVRFAAL.

It belongs to the major facilitator superfamily.

The protein resides in the cell membrane. This is an uncharacterized protein from Bacillus subtilis (strain 168).